The sequence spans 161 residues: MAEINSLTELSVVTNTAETHENIAPVHVQKLDSQGRAYATGKRKDAVARVWIKPGSGKITINNKEFDKYFARPVLRMILRQPIVATNRDTQFDIIATVAGGGLSGQAGAVRHGISKALTYYEPELRTILKKGGFLTRDSRVVERKKYGKAKARRSFQFSKR.

It belongs to the universal ribosomal protein uS9 family.

The protein is Small ribosomal subunit protein uS9 of Bartonella henselae (strain ATCC 49882 / DSM 28221 / CCUG 30454 / Houston 1) (Rochalimaea henselae).